Reading from the N-terminus, the 505-residue chain is 2-isopropylmalate synthase (505 aa).

Residues 5–267 (VYIFDTTLRD…YTNIKTEEIY (263 aa)) form the Pyruvate carboxyltransferase domain. Residues Asp-14, His-202, His-204, and Asn-238 each contribute to the Mn(2+) site. Positions 391-505 (TLEYLHISSG…VNKLIWDSQK (115 aa)) are regulatory domain.

Belongs to the alpha-IPM synthase/homocitrate synthase family. LeuA type 1 subfamily. In terms of assembly, homodimer. Mn(2+) is required as a cofactor.

It is found in the cytoplasm. The catalysed reaction is 3-methyl-2-oxobutanoate + acetyl-CoA + H2O = (2S)-2-isopropylmalate + CoA + H(+). The protein operates within amino-acid biosynthesis; L-leucine biosynthesis; L-leucine from 3-methyl-2-oxobutanoate: step 1/4. Functionally, catalyzes the condensation of the acetyl group of acetyl-CoA with 3-methyl-2-oxobutanoate (2-ketoisovalerate) to form 3-carboxy-3-hydroxy-4-methylpentanoate (2-isopropylmalate). This chain is 2-isopropylmalate synthase, found in Pelotomaculum thermopropionicum (strain DSM 13744 / JCM 10971 / SI).